The following is a 136-amino-acid chain: Nucleoside diphosphate kinase (136 aa).

ATP is bound by residues Lys10, Phe58, Arg86, Thr92, Arg104, and Asn114. Catalysis depends on His117, which acts as the Pros-phosphohistidine intermediate.

This sequence belongs to the NDK family. As to quaternary structure, homotetramer. Requires Mg(2+) as cofactor.

Its subcellular location is the cytoplasm. The enzyme catalyses a 2'-deoxyribonucleoside 5'-diphosphate + ATP = a 2'-deoxyribonucleoside 5'-triphosphate + ADP. The catalysed reaction is a ribonucleoside 5'-diphosphate + ATP = a ribonucleoside 5'-triphosphate + ADP. Its function is as follows. Major role in the synthesis of nucleoside triphosphates other than ATP. The ATP gamma phosphate is transferred to the NDP beta phosphate via a ping-pong mechanism, using a phosphorylated active-site intermediate. The sequence is that of Nucleoside diphosphate kinase from Mycolicibacterium paratuberculosis (strain ATCC BAA-968 / K-10) (Mycobacterium paratuberculosis).